The primary structure comprises 1381 residues: DNA-directed RNA polymerase subunit beta (1381 aa).

It belongs to the RNA polymerase beta chain family. The RNAP catalytic core consists of 2 alpha, 1 beta, 1 beta' and 1 omega subunit. When a sigma factor is associated with the core the holoenzyme is formed, which can initiate transcription.

It carries out the reaction RNA(n) + a ribonucleoside 5'-triphosphate = RNA(n+1) + diphosphate. DNA-dependent RNA polymerase catalyzes the transcription of DNA into RNA using the four ribonucleoside triphosphates as substrates. The polypeptide is DNA-directed RNA polymerase subunit beta (Halorhodospira halophila (strain DSM 244 / SL1) (Ectothiorhodospira halophila (strain DSM 244 / SL1))).